Reading from the N-terminus, the 309-residue chain is Electron transfer flavoprotein subunit alpha (309 aa).

Residue 253–281 coordinates FAD; it reads LYIAVGISGAIQHLAGMKDSKVIVAINKD.

It belongs to the ETF alpha-subunit/FixB family. Heterodimer of an alpha and a beta subunit. FAD serves as cofactor.

Functionally, the electron transfer flavoprotein serves as a specific electron acceptor for other dehydrogenases. It transfers the electrons to the main respiratory chain via ETF-ubiquinone oxidoreductase (ETF dehydrogenase). The chain is Electron transfer flavoprotein subunit alpha (etfA) from Pseudomonas aeruginosa (strain ATCC 15692 / DSM 22644 / CIP 104116 / JCM 14847 / LMG 12228 / 1C / PRS 101 / PAO1).